The following is a 62-amino-acid chain: ATP synthase subunit J, mitochondrial (62 aa).

The chain crosses the membrane as a helical span at residues Ile-13–Ala-32.

In terms of assembly, F-type ATP synthases have 2 components, the catalytic core F(1) and the membrane-embedded component F(0), linked together by a central stalk and a peripheral stalk. The central stalk, also called rotor shaft, is often seen as part of F(1). The peripheral stalk is seen as part of F(0). F(0) contains the membrane channel next to the rotor. F-type ATP synthases form dimers but each monomer functions independently in ATP generation. The dimer consists of 17 different polypeptides: ATP1 (subunit alpha, 3 molecules per monomer, part of F(1)), ATP2 (subunit beta, 3 copies per monomer, part of F(1)), ATP3 (subunit gamma, part of the central stalk), ATP4 (subunit b, part of the peripheral stalk), ATP5/OSCP (subunit 5/OSCP, part of the peripheral stalk), ATP6 (subunit a, part of the peripheral stalk), ATP7 (subunit d, part of the peripheral stalk), ATP8 (subunit 8, part of the peripheral stalk), OLI1 (subunit c, part of the rotor, 10 molecules per monomer), ATP14 (subunit h, part of the peripheral stalk), ATP15 (subunit epsilon, part of the central stalk), ATP16 (subunit delta, part of the central stalk), ATP17 (subunit f, part of the peripheral stalk), ATP18 (subunit i/j, part of the peripheral stalk), ATP19 (subunit k, dimer-specific, at interface between monomers), ATP20 (subunit g, at interface between monomers), TIM11 (subunit e, at interface between monomers).

The protein localises to the mitochondrion inner membrane. Mitochondrial membrane ATP synthase (F(1)F(0) ATP synthase or Complex V) produces ATP from ADP in the presence of a proton gradient across the membrane which is generated by electron transport complexes of the respiratory chain. F-type ATP synthases consist of two structural domains, F(1) - containing the extramembraneous catalytic core, and F(0) - containing the membrane proton channel, linked together by a central stalk and a peripheral stalk. During catalysis, ATP synthesis in the catalytic domain of F(1) is coupled via a rotary mechanism of the central stalk subunits to proton translocation. Part of the complex F(0) domain. Minor subunit located with subunit a/ATP6 in the membrane. The sequence is that of ATP synthase subunit J, mitochondrial from Yarrowia lipolytica (strain CLIB 122 / E 150) (Yeast).